The sequence spans 186 residues: MLALINRLLDWFKSLFWKEEMELTLVGLQYSGKTTFVNVIASGQFSEDMIPTVGFNMRKVTKGNVTIKIWDIGGQPRFRSMWERYCRGVNAIVYMVDAADREKVEASRNELHNLLDKPQLQGIPVLVLGNKRDLPNALDEKQLIEKMNLAAIQDREICCYSISCKEKDNIDITLQWLIQHSKSRRS.

The note=Mediates targeting to membranes intramembrane region spans 1–19 (MLALINRLLDWFKSLFWKE). Residues 29–35 (QYSGKTT), 71–75 (DIGGQ), and 130–133 (NKRD) each bind GTP.

It belongs to the small GTPase superfamily. Arf family.

It is found in the late endosome membrane. Its subcellular location is the lysosome membrane. The protein resides in the cytoplasm. It localises to the cytoskeleton. The protein localises to the spindle. It is found in the early endosome membrane. Functionally, small GTPase which cycles between active GTP-bound and inactive GDP-bound states. In its active state, binds to a variety of effector proteins playing a key role in the regulation of lysosomal positioning which is important for nutrient sensing, natural killer cell-mediated cytotoxicity and antigen presentation. Along with its effectors, orchestrates lysosomal transport and fusion. This is ADP-ribosylation factor-like protein 8B-A (arl8ba) from Danio rerio (Zebrafish).